The chain runs to 927 residues: Probable dipeptidyl-aminopeptidase B (927 aa).

2 disordered regions span residues 1 to 44 and 58 to 101; these read MAPA…TTSI and GHFE…KNDG. Topologically, residues 1 to 108 are cytoplasmic; it reads MAPAPGMAPY…NDGMNRGMRR (108 aa). Composition is skewed to basic and acidic residues over residues 19 to 36 and 58 to 70; these read HRPE…HESE and GHFE…PMKE. Residues 109–129 traverse the membrane as a helical; Signal-anchor for type II membrane protein segment; sequence TLIIVAGLLISAWVVGLFFYV. Residues 130–927 lie on the Vacuolar side of the membrane; that stretch reads SHKSYKPASQ…RSIQPILPIL (798 aa). N-linked (GlcNAc...) asparagine glycans are attached at residues Asn365 and Asn530. Ser769 serves as the catalytic Charge relay system. A glycan (N-linked (GlcNAc...) asparagine) is linked at Asn828. Catalysis depends on charge relay system residues Asp846 and His879.

It belongs to the peptidase S9B family.

The protein resides in the vacuole membrane. It carries out the reaction Release of an N-terminal dipeptide, Xaa-Yaa-|-Zaa-, from a polypeptide, preferentially when Yaa is Pro, provided Zaa is neither Pro nor hydroxyproline.. Its function is as follows. Type IV dipeptidyl-peptidase which removes N-terminal dipeptides sequentially from polypeptides having unsubstituted N-termini provided that the penultimate residue is proline. This is Probable dipeptidyl-aminopeptidase B (DAPB) from Podospora anserina (strain S / ATCC MYA-4624 / DSM 980 / FGSC 10383) (Pleurage anserina).